The chain runs to 90 residues: Protein LIM3 (90 aa).

The N-terminal stretch at 1-26 is a signal peptide; it reads MAAVKFLVCSVLLVVLATQSEIGLAQ. Intrachain disulfides connect Cys-28–Cys-65, Cys-38–Cys-54, Cys-55–Cys-80, and Cys-67–Cys-87.

It belongs to the A9/FIL1 family.

It is found in the secreted. The sequence is that of Protein LIM3 (LIM3) from Lilium longiflorum (Trumpet lily).